The primary structure comprises 543 residues: MSWGTELWDQFDNLEKHTQWGIDFLDKYAKFVKERLEIEQNYAKQLRNLVKKFCPKRSAKDEEPRFTSCLSFYNILNELNDYAGQREVVAEEIGHRVYAEIMRYSNDIKGERKSHLHEGRKAQQYLDMCLKQMDNSKRKFERECREAEKAQQSYERLDNDTNATKSDVEKAKQQLHLRTHMADESKNEYAAQLQNYNAEQHKHFYIVIPQVYKHLQEMDERRTIKLSECYKGFADAERKVIPIISKCLEGMVQAAKSVDERRDSQIVVDCFKSGFEPPGDFPFEDYSQHIYRTVSDGTISTPKQESLKPDPRMTVGKAKGKLWLFGKKPKGPALEDFSHLPPEQRRKRLQQRIDELSRELQKEMDQKDALNKMKDVYEKNPQMGDPGSLHPKIAETTSNIERLRMEIHKNEGWLSEVEGKVSQRSERRHSAEANHLVAQGRESPEGSYTEDANQEGRVQPQHHAHPEFDDEFDDDEPLPAIGHCKSLYPFDGNNEGTLAMKEGEVLYIIEEDKGDGWTRARKQNGEEGYVPTSYIEITLEKKQ.

The 263-residue stretch at 1–263 (MSWGTELWDQ…AAKSVDERRD (263 aa)) folds into the F-BAR domain. Coiled coils occupy residues 66–258 (FTSC…AKSV) and 334–426 (LEDF…QRSE). The REM-1 domain occupies 339-416 (HLPPEQRRKR…IHKNEGWLSE (78 aa)). A disordered region spans residues 424–467 (RSERRHSAEANHLVAQGRESPEGSYTEDANQEGRVQPQHHAHPE). Residues 479–540 (PAIGHCKSLY…PTSYIEITLE (62 aa)) enclose the SH3 domain.

It belongs to the FNBP1 family. Homodimerizes, the dimers can polymerize end-to-end to form filamentous structures. Interacts with GTP-bound cdc42 and wasl/n-wasp.

It is found in the cytoplasm. It localises to the cytoskeleton. Its subcellular location is the cell cortex. The protein localises to the cytoplasmic vesicle. The protein resides in the cell membrane. In terms of biological role, required to coordinate membrane tubulation with reorganization of the actin cytoskeleton during endocytosis. Essential for autophagy of intracellular bacterial pathogens. Promotes cdc42-induced actin polymerization by activating the wasl-waspip complex, the predominant form of wasl/n-wasp in cells. This is Formin-binding protein 1-like (fnbp1l) from Xenopus laevis (African clawed frog).